A 347-amino-acid polypeptide reads, in one-letter code: Protein-arginine kinase (347 aa).

The 226-residue stretch at 22–247 folds into the Phosphagen kinase C-terminal domain; the sequence is LVVSTRIRLA…EQVIQAERHA (226 aa). ATP contacts are provided by residues 25–29, histidine 85, arginine 118, 169–173, and 200–205; these read STRIR, RASVM, and RGRYGE. The RDXXRA motif of the pArg binding pocket involved in allosteric regulation motif lies at 330–335; it reads RDRERA.

This sequence belongs to the ATP:guanido phosphotransferase family.

It catalyses the reaction L-arginyl-[protein] + ATP = N(omega)-phospho-L-arginyl-[protein] + ADP + H(+). With respect to regulation, appears to be allosterically activated by the binding of pArg-containing polypeptides to the pArg-binding pocket localized in the C-terminal domain of McsB. Catalyzes the specific phosphorylation of arginine residues in proteins. This Exiguobacterium sp. (strain ATCC BAA-1283 / AT1b) protein is Protein-arginine kinase.